An 86-amino-acid polypeptide reads, in one-letter code: U15-lycotoxin-Ls1a (86 aa).

The signal sequence occupies residues 1-20; it reads MNSKIFAVLFLLAFLSCVLS. One can recognise a WAP domain in the interval 21 to 66; that stretch reads DQYCPKSSITACKKMNIRNDCCKDDDCTGGSWCCATPCGNFCKYPT. 5 disulfide bridges follow: C24–C54, C32–C58, C41–C53, C42–C80, and C47–C62.

Belongs to the venom protein 11 family. 01 (wap-1) subfamily. Contains 5 disulfide bonds. Expressed by the venom gland.

It localises to the secreted. In terms of biological role, has antibacterial activity. This chain is U15-lycotoxin-Ls1a, found in Lycosa singoriensis (Wolf spider).